Reading from the N-terminus, the 316-residue chain is 4-diphosphocytidyl-2-C-methyl-D-erythritol kinase (316 aa).

The active site involves lysine 14. 96-106 provides a ligand contact to ATP; the sequence is PMGAGLGGGSS. The active site involves aspartate 138.

Belongs to the GHMP kinase family. IspE subfamily.

It catalyses the reaction 4-CDP-2-C-methyl-D-erythritol + ATP = 4-CDP-2-C-methyl-D-erythritol 2-phosphate + ADP + H(+). Its pathway is isoprenoid biosynthesis; isopentenyl diphosphate biosynthesis via DXP pathway; isopentenyl diphosphate from 1-deoxy-D-xylulose 5-phosphate: step 3/6. Its function is as follows. Catalyzes the phosphorylation of the position 2 hydroxy group of 4-diphosphocytidyl-2C-methyl-D-erythritol. The polypeptide is 4-diphosphocytidyl-2-C-methyl-D-erythritol kinase (Solibacter usitatus (strain Ellin6076)).